Here is a 274-residue protein sequence, read N- to C-terminus: AA9 family lytic polysaccharide monooxygenase A (274 aa).

Residues 1-22 (MHVPQFISTGALLALLARPAAA) form the signal peptide. Histidine 23 serves as a coordination point for Cu(2+). Residues cysteine 63 and cysteine 194 are joined by a disulfide bond. Residues glycine 67, aspartate 98, and serine 100 each coordinate (1,4-beta-D-glucosyl)n. Histidine 101 lines the Cu(2+) pocket. Position 174 (histidine 174) interacts with O2. Residue aspartate 177 coordinates (1,4-beta-D-glucosyl)n. Residue tyrosine 191 coordinates Cu(2+).

Belongs to the polysaccharide monooxygenase AA9 family. Requires Cu(2+) as cofactor.

It localises to the secreted. It carries out the reaction [(1-&gt;4)-beta-D-glucosyl]n+m + reduced acceptor + O2 = 4-dehydro-beta-D-glucosyl-[(1-&gt;4)-beta-D-glucosyl]n-1 + [(1-&gt;4)-beta-D-glucosyl]m + acceptor + H2O.. Lytic polysaccharide monooxygenase (LPMO) that depolymerizes crystalline and amorphous polysaccharides via the oxidation of scissile alpha- or beta-(1-4)-glycosidic bonds, yielding C4 oxidation products. Catalysis by LPMOs requires the reduction of the active-site copper from Cu(II) to Cu(I) by a reducing agent and H(2)O(2) or O(2) as a cosubstrate. Cleaves a range of polysaccharides, including cellulose, xyloglucan, mixed-linkage glucan and glucomannan. In Collariella virescens (Soil fungus), this protein is AA9 family lytic polysaccharide monooxygenase A.